Reading from the N-terminus, the 462-residue chain is Fumarate hydratase class II (462 aa).

Substrate-binding positions include 97-99 (SGT), 128-131 (HPND), 138-140 (STN), and Thr186. His187 functions as the Proton donor/acceptor in the catalytic mechanism. Ser317 is a catalytic residue. Residues Ser318 and 323–325 (KVN) contribute to the substrate site.

Belongs to the class-II fumarase/aspartase family. Fumarase subfamily. In terms of assembly, homotetramer.

It is found in the cytoplasm. The enzyme catalyses (S)-malate = fumarate + H2O. It functions in the pathway carbohydrate metabolism; tricarboxylic acid cycle; (S)-malate from fumarate: step 1/1. Involved in the TCA cycle. Catalyzes the stereospecific interconversion of fumarate to L-malate. In Neisseria meningitidis serogroup A / serotype 4A (strain DSM 15465 / Z2491), this protein is Fumarate hydratase class II.